Consider the following 196-residue polypeptide: Holliday junction branch migration complex subunit RuvA (196 aa).

Residues 1–62 are domain I; that stretch reads MYEYINGLIT…ENEMTLYGFI (62 aa). The tract at residues 63 to 141 is domain II; the sequence is DENEKYLFNK…DLALSAGMTV (79 aa). The tract at residues 142–146 is flexible linker; it reads ETVPT. Residues 147–196 form a domain III region; it reads TDNQALADALAALESLGYSAKDVAKLQTVLANQKDTTDGYIRSALKFLVK.

It belongs to the RuvA family. Homotetramer. Forms an RuvA(8)-RuvB(12)-Holliday junction (HJ) complex. HJ DNA is sandwiched between 2 RuvA tetramers; dsDNA enters through RuvA and exits via RuvB. An RuvB hexamer assembles on each DNA strand where it exits the tetramer. Each RuvB hexamer is contacted by two RuvA subunits (via domain III) on 2 adjacent RuvB subunits; this complex drives branch migration. In the full resolvosome a probable DNA-RuvA(4)-RuvB(12)-RuvC(2) complex forms which resolves the HJ.

It is found in the cytoplasm. Functionally, the RuvA-RuvB-RuvC complex processes Holliday junction (HJ) DNA during genetic recombination and DNA repair, while the RuvA-RuvB complex plays an important role in the rescue of blocked DNA replication forks via replication fork reversal (RFR). RuvA specifically binds to HJ cruciform DNA, conferring on it an open structure. The RuvB hexamer acts as an ATP-dependent pump, pulling dsDNA into and through the RuvAB complex. HJ branch migration allows RuvC to scan DNA until it finds its consensus sequence, where it cleaves and resolves the cruciform DNA. This Leuconostoc citreum (strain KM20) protein is Holliday junction branch migration complex subunit RuvA.